The sequence spans 66 residues: Large ribosomal subunit protein uL29 (66 aa).

The protein belongs to the universal ribosomal protein uL29 family.

The sequence is that of Large ribosomal subunit protein uL29 from Helicobacter pylori (strain P12).